Consider the following 239-residue polypeptide: 7-cyano-7-deazaguanine synthase (239 aa).

16-26 (FSGGQDSTTCL) contributes to the ATP binding site. The Zn(2+) site is built by Cys-204, Cys-219, Cys-222, and Cys-225.

The protein belongs to the QueC family. Zn(2+) serves as cofactor.

It catalyses the reaction 7-carboxy-7-deazaguanine + NH4(+) + ATP = 7-cyano-7-deazaguanine + ADP + phosphate + H2O + H(+). It participates in purine metabolism; 7-cyano-7-deazaguanine biosynthesis. In terms of biological role, catalyzes the ATP-dependent conversion of 7-carboxy-7-deazaguanine (CDG) to 7-cyano-7-deazaguanine (preQ(0)). In Polaromonas naphthalenivorans (strain CJ2), this protein is 7-cyano-7-deazaguanine synthase.